The sequence spans 387 residues: Delta(12)-acyl-lipid-desaturase (387 aa).

The segment at 1–31 (MGAGGRMTVPNKWEGEGDEKSQKPVQRVPSA) is disordered. Over residues 13 to 22 (WEGEGDEKSQ) the composition is skewed to basic and acidic residues. 2 consecutive transmembrane segments (helical) span residues 58 to 78 (SYVL…TTYI) and 88 to 108 (AAWP…WVIA). The Histidine box-1 motif lies at 109–113 (HECGH). A helical membrane pass occupies residues 121–141 (WVDDCVGLVLHSALLVPYFSW). The Histidine box-2 signature appears at 145-149 (HRRHH). A run of 3 helical transmembrane segments spans residues 183–203 (VMTL…LNVS), 229–249 (IYIS…IAAA), and 251–271 (GLAW…AFLV). Residues 319–323 (HVAHH) carry the Histidine box-3 motif.

This sequence belongs to the fatty acid desaturase type 1 family.

It localises to the membrane. Its pathway is lipid metabolism; polyunsaturated fatty acid biosynthesis. Its function is as follows. Delta(12)-fatty acid desaturase producing in a heterologous system linoleic acid (18:2(9Z,12Z)) and to a lower extent hexadecadienoic acid (16:2(9Z,12Z)). The protein is Delta(12)-acyl-lipid-desaturase of Punica granatum (Pomegranate).